The following is a 162-amino-acid chain: NADH-quinone oxidoreductase subunit I (162 aa).

2 consecutive 4Fe-4S ferredoxin-type domains span residues 54–83 and 93–122; these read RRYE…IESE and TRYD…ETQI. Positions 63, 66, 69, 73, 102, 105, 108, and 112 each coordinate [4Fe-4S] cluster.

This sequence belongs to the complex I 23 kDa subunit family. NDH-1 is composed of 14 different subunits. Subunits NuoA, H, J, K, L, M, N constitute the membrane sector of the complex. [4Fe-4S] cluster serves as cofactor.

The protein localises to the cell inner membrane. The enzyme catalyses a quinone + NADH + 5 H(+)(in) = a quinol + NAD(+) + 4 H(+)(out). Functionally, NDH-1 shuttles electrons from NADH, via FMN and iron-sulfur (Fe-S) centers, to quinones in the respiratory chain. The immediate electron acceptor for the enzyme in this species is believed to be ubiquinone. Couples the redox reaction to proton translocation (for every two electrons transferred, four hydrogen ions are translocated across the cytoplasmic membrane), and thus conserves the redox energy in a proton gradient. This is NADH-quinone oxidoreductase subunit I from Burkholderia cenocepacia (strain HI2424).